Reading from the N-terminus, the 430-residue chain is Serine--tRNA ligase (430 aa).

Residue 237-239 (TAE) coordinates L-serine. Residue 268-270 (RSE) coordinates ATP. Residue E291 coordinates L-serine. An ATP-binding site is contributed by 355-358 (EISS). S391 lines the L-serine pocket.

Belongs to the class-II aminoacyl-tRNA synthetase family. Type-1 seryl-tRNA synthetase subfamily. Homodimer. The tRNA molecule binds across the dimer.

Its subcellular location is the cytoplasm. It catalyses the reaction tRNA(Ser) + L-serine + ATP = L-seryl-tRNA(Ser) + AMP + diphosphate + H(+). The catalysed reaction is tRNA(Sec) + L-serine + ATP = L-seryl-tRNA(Sec) + AMP + diphosphate + H(+). The protein operates within aminoacyl-tRNA biosynthesis; selenocysteinyl-tRNA(Sec) biosynthesis; L-seryl-tRNA(Sec) from L-serine and tRNA(Sec): step 1/1. Its function is as follows. Catalyzes the attachment of serine to tRNA(Ser). Is also able to aminoacylate tRNA(Sec) with serine, to form the misacylated tRNA L-seryl-tRNA(Sec), which will be further converted into selenocysteinyl-tRNA(Sec). The polypeptide is Serine--tRNA ligase (Klebsiella pneumoniae subsp. pneumoniae (strain ATCC 700721 / MGH 78578)).